Consider the following 275-residue polypeptide: 2,3,4,5-tetrahydropyridine-2,6-dicarboxylate N-succinyltransferase (275 aa).

Residues Arg105 and Asp142 each coordinate substrate.

This sequence belongs to the transferase hexapeptide repeat family. As to quaternary structure, homotrimer.

The protein resides in the cytoplasm. It catalyses the reaction (S)-2,3,4,5-tetrahydrodipicolinate + succinyl-CoA + H2O = (S)-2-succinylamino-6-oxoheptanedioate + CoA. It functions in the pathway amino-acid biosynthesis; L-lysine biosynthesis via DAP pathway; LL-2,6-diaminopimelate from (S)-tetrahydrodipicolinate (succinylase route): step 1/3. In Histophilus somni (strain 129Pt) (Haemophilus somnus), this protein is 2,3,4,5-tetrahydropyridine-2,6-dicarboxylate N-succinyltransferase.